The chain runs to 1442 residues: Chitin synthase regulator SKT5 (1442 aa).

2 disordered regions span residues 1 to 54 (MTHP…SPTL) and 72 to 117 (LALK…RHLQ). Residues 12 to 25 (NGKEPEKEEPRCVH) show a composition bias toward basic and acidic residues. The segment covering 39–53 (KSSSAITNENVSSPT) has biased composition (polar residues). The segment covering 75 to 99 (KEPENGKNKHPDSEQDDGDMKEQRS) has biased composition (basic and acidic residues). Sel1-like repeat units follow at residues 198 to 236 (VESQ…KRGH), 237 to 272 (PDAA…SRKH), 273 to 309 (PGAQ…ENAT), 313 to 350 (PHAL…EMGY), 351 to 387 (APSA…QQNH), 388 to 425 (KEAC…EQGL), and 426 to 461 (AKAE…EHGD). A disordered region spans residues 550 to 1402 (EKPKTATPTS…FSTPDSSSSK (853 aa)). Residues 605–617 (PKPPTPPPPPPPE) show a composition bias toward pro residues. Over residues 633–648 (FKSRLLRLGKMGKIRK) the composition is skewed to basic residues. A compositionally biased stretch (low complexity) spans 747–758 (GPSSAAGADGAP). 3 stretches are compositionally biased toward basic and acidic residues: residues 762–804 (GEPK…KSEK), 821–840 (GSDK…KPSD), and 859–875 (RPDE…KDSE). Residues 876 to 891 (STSPSSPKPTTGSAEP) are compositionally biased toward low complexity. Composition is skewed to pro residues over residues 964–977 (PFPP…PPNA), 1139–1158 (RPGP…PSRP), and 1200–1220 (AMQP…PTGP). Polar residues predominate over residues 1232–1243 (PSQSSMHQSGNG). The span at 1271–1282 (PRPPRPTSPPPF) shows a compositional bias: pro residues. Positions 1295-1305 (RGVMPPGSGPS) are enriched in low complexity. Pro residues-rich tracts occupy residues 1306 to 1322 (MRPP…PRSP) and 1371 to 1386 (DRPP…PPKT). Residues 1392–1402 (GFSTPDSSSSK) show a composition bias toward polar residues.

This sequence belongs to the SKT5 family.

It localises to the cell membrane. In terms of biological role, activator of the chitin synthase CHS3 which polymerizes chitin, a structural polymer of the fungal cell wall. The polypeptide is Chitin synthase regulator SKT5 (Malassezia restricta (strain ATCC 96810 / NBRC 103918 / CBS 7877) (Seborrheic dermatitis infection agent)).